Reading from the N-terminus, the 108-residue chain is Nucleoid-associated protein Mmwyl1_2533 (108 aa).

The interval 1-22 (MFKGGMGNMMRQAQQMQENMQK) is disordered. Positions 11 to 22 (RQAQQMQENMQK) are enriched in polar residues.

Belongs to the YbaB/EbfC family. In terms of assembly, homodimer.

The protein localises to the cytoplasm. It is found in the nucleoid. Its function is as follows. Binds to DNA and alters its conformation. May be involved in regulation of gene expression, nucleoid organization and DNA protection. In Marinomonas sp. (strain MWYL1), this protein is Nucleoid-associated protein Mmwyl1_2533.